The sequence spans 186 residues: Translation initiation factor IF-3 (186 aa).

The protein belongs to the IF-3 family. In terms of assembly, monomer.

It localises to the cytoplasm. Functionally, IF-3 binds to the 30S ribosomal subunit and shifts the equilibrium between 70S ribosomes and their 50S and 30S subunits in favor of the free subunits, thus enhancing the availability of 30S subunits on which protein synthesis initiation begins. This is Translation initiation factor IF-3 from Chlamydia muridarum (strain MoPn / Nigg).